A 311-amino-acid chain; its full sequence is Lipid A biosynthesis acyltransferase (311 aa).

Residues 19–39 form a helical membrane-spanning segment; it reads WLFWLGVAIWRSILCLPYPIL. The HXXXXD motif motif lies at 134–139; it reads HFLTLE.

The protein belongs to the LpxL/LpxM/LpxP family.

It is found in the cell inner membrane. It carries out the reaction an alpha-Kdo-(2-&gt;4)-alpha-Kdo-(2-&gt;6)-lipid IVA + a fatty acyl-[ACP] = an alpha-Kdo-(2-&gt;4)-alpha-Kdo-(2-&gt;6)-(acyl)-lipid IVA + holo-[ACP]. Its pathway is glycolipid biosynthesis; KDO(2)-lipid A biosynthesis; KDO(2)-lipid A from CMP-3-deoxy-D-manno-octulosonate and lipid IV(A): step 3/4. It functions in the pathway bacterial outer membrane biogenesis; lipopolysaccharide biosynthesis. Catalyzes the transfer of an acyl chain from an acyl-[acyl-carrier-protein] (ACP) to a Kdo(2)-lipid IV(A) to form a Kdo(2)-(acyl)-lipid IV(A). This Haemophilus influenzae (strain ATCC 51907 / DSM 11121 / KW20 / Rd) protein is Lipid A biosynthesis acyltransferase.